The primary structure comprises 192 residues: uncharacterized protein (192 aa).

In terms of domain architecture, Nudix hydrolase spans 29-160; sequence HRQAAVLIPI…PLDIYRRGDS (132 aa). The Nudix box signature appears at 67-89; it reads GAVDDTDASVIAAALREAEEEVA. The Mg(2+) site is built by E83 and E87.

It belongs to the Nudix hydrolase family. PCD1 subfamily. The cofactor is Mn(2+). Mg(2+) serves as cofactor.

Functionally, probably mediates the hydrolysis of some nucleoside diphosphate derivatives. This is an uncharacterized protein from Shigella boydii serotype 4 (strain Sb227).